We begin with the raw amino-acid sequence, 155 residues long: Ribosomal RNA large subunit methyltransferase H (155 aa).

S-adenosyl-L-methionine is bound by residues leucine 72, glycine 103, and 122–127 (LGRMVW).

This sequence belongs to the RNA methyltransferase RlmH family. Homodimer.

Its subcellular location is the cytoplasm. It catalyses the reaction pseudouridine(1915) in 23S rRNA + S-adenosyl-L-methionine = N(3)-methylpseudouridine(1915) in 23S rRNA + S-adenosyl-L-homocysteine + H(+). Functionally, specifically methylates the pseudouridine at position 1915 (m3Psi1915) in 23S rRNA. The sequence is that of Ribosomal RNA large subunit methyltransferase H from Cereibacter sphaeroides (strain KD131 / KCTC 12085) (Rhodobacter sphaeroides).